A 126-amino-acid polypeptide reads, in one-letter code: MKANNAETPDSSNAADTFKWLAAFVLAAAAVVGNYLYGEMSVVVRAAGVVVLIAAALGVAATTTKGKAAISFAKESRMEVRKVVWPTRQETMQTTLIVLAVSIVMALVLWGIDGIMVRLVALATGV.

Helical transmembrane passes span 20-40 (WLAA…YGEM), 42-62 (VVVR…VAAT), and 97-117 (IVLA…GIMV).

The protein belongs to the SecE/SEC61-gamma family. As to quaternary structure, component of the Sec protein translocase complex. Heterotrimer consisting of SecY, SecE and SecG subunits. The heterotrimers can form oligomers, although 1 heterotrimer is thought to be able to translocate proteins. Interacts with the ribosome. Interacts with SecDF, and other proteins may be involved. Interacts with SecA.

It is found in the cell inner membrane. Essential subunit of the Sec protein translocation channel SecYEG. Clamps together the 2 halves of SecY. May contact the channel plug during translocation. In Vibrio alginolyticus, this protein is Protein translocase subunit SecE.